Here is an 85-residue protein sequence, read N- to C-terminus: Large ribosomal subunit protein bL31B (85 aa).

It belongs to the bacterial ribosomal protein bL31 family. Type B subfamily. In terms of assembly, part of the 50S ribosomal subunit.

The sequence is that of Large ribosomal subunit protein bL31B from Clavibacter michiganensis subsp. michiganensis (strain NCPPB 382).